A 677-amino-acid chain; its full sequence is DNA-directed RNA polymerase subunit beta' (677 aa).

The Zn(2+) site is built by cysteine 69, cysteine 71, cysteine 87, and cysteine 90. Mg(2+) contacts are provided by aspartate 489, aspartate 491, and aspartate 493.

Belongs to the RNA polymerase beta' chain family. RpoC1 subfamily. In terms of assembly, in plastids the minimal PEP RNA polymerase catalytic core is composed of four subunits: alpha, beta, beta', and beta''. When a (nuclear-encoded) sigma factor is associated with the core the holoenzyme is formed, which can initiate transcription. The cofactor is Mg(2+). Zn(2+) is required as a cofactor.

The protein localises to the plastid. Its subcellular location is the chloroplast. The catalysed reaction is RNA(n) + a ribonucleoside 5'-triphosphate = RNA(n+1) + diphosphate. DNA-dependent RNA polymerase catalyzes the transcription of DNA into RNA using the four ribonucleoside triphosphates as substrates. In Daucus carota (Wild carrot), this protein is DNA-directed RNA polymerase subunit beta'.